The sequence spans 258 residues: PHD finger protein ALFIN-LIKE 1 (258 aa).

Basic and acidic residues predominate over residues 1 to 10 (MDASYRRDGR). 2 disordered regions span residues 1–24 (MDASYRRDGRGGGGGGGGGGSAPR) and 150–200 (SGSR…DGDH). Residues 11–21 (GGGGGGGGGGS) are compositionally biased toward gly residues. Residues 175–187 (HTSDVARVENNIK) are compositionally biased toward basic and acidic residues. Acidic residues predominate over residues 188–199 (EEDEGYDEDDGD). The PHD-type zinc finger occupies 202–254 (ETLCGTCGGIYSADEFWIGCDVCERWYHGKCVKITPAKAESIKQYKCPSCSSK).

The protein belongs to the Alfin family. Interacts with H3K4me3 and to a lesser extent with H3K4me2.

It is found in the nucleus. Functionally, histone-binding component that specifically recognizes H3 tails trimethylated on 'Lys-4' (H3K4me3), which mark transcription start sites of virtually all active genes. The sequence is that of PHD finger protein ALFIN-LIKE 1 from Oryza sativa subsp. indica (Rice).